Here is a 285-residue protein sequence, read N- to C-terminus: K88 fimbrial protein AB (285 aa).

The signal sequence occupies residues 1 to 21 (MKKTLIALAIAASAASGMAHA).

This sequence belongs to the fimbrial K88 protein family. K88 fimbria, 0.1-1 micrometer in length and 7 nanometers in diameter, is composed of about 100 identical subunits.

Its subcellular location is the fimbrium. Functionally, K88 major fimbrial subunit. Fimbriae (also called pili), are polar filaments radiating from the surface of the bacterium to a length of 0.5-1.5 micrometers and numbering 100-300 per cell. They enable bacteria to colonize the epithelium of specific host organs. The chain is K88 fimbrial protein AB (faeG) from Escherichia coli.